We begin with the raw amino-acid sequence, 153 residues long: Interleukin-2 (153 aa).

The N-terminal stretch at 1–20 is a signal peptide; the sequence is MYRMQLLSCIALSLALVTNS. An O-linked (GalNAc...) threonine glycan is attached at threonine 23. Cysteine 78 and cysteine 125 are joined by a disulfide.

Belongs to the IL-2 family.

The protein localises to the secreted. Cytokine produced by activated CD4-positive helper T-cells and to a lesser extend activated CD8-positive T-cells and natural killer (NK) cells that plays pivotal roles in the immune response and tolerance. Binds to a receptor complex composed of either the high-affinity trimeric IL-2R (IL2RA/CD25, IL2RB/CD122 and IL2RG/CD132) or the low-affinity dimeric IL-2R (IL2RB and IL2RG). Interaction with the receptor leads to oligomerization and conformation changes in the IL-2R subunits resulting in downstream signaling starting with phosphorylation of JAK1 and JAK3. In turn, JAK1 and JAK3 phosphorylate the receptor to form a docking site leading to the phosphorylation of several substrates including STAT5. This process leads to activation of several pathways including STAT, phosphoinositide-3-kinase/PI3K and mitogen-activated protein kinase/MAPK pathways. Functions as a T-cell growth factor and can increase NK-cell cytolytic activity as well. Promotes strong proliferation of activated B-cells and subsequently immunoglobulin production. Plays a pivotal role in regulating the adaptive immune system by controlling the survival and proliferation of regulatory T-cells, which are required for the maintenance of immune tolerance. Moreover, participates in the differentiation and homeostasis of effector T-cell subsets, including Th1, Th2, Th17 as well as memory CD8-positive T-cells. This Homo sapiens (Human) protein is Interleukin-2 (IL2).